We begin with the raw amino-acid sequence, 158 residues long: Lipoprotein signal peptidase (158 aa).

The next 4 helical transmembrane spans lie at 7-27 (LFWIAAFIAFFLDQITKYWVV), 38-58 (LLTGIFHFTYVTNTGAAFSLL), 68-88 (LSLGVSLVLIALALFGPTLNL), and 92-112 (LGYGLILGGAMGNGIDRFVLG). Catalysis depends on residues aspartate 116 and aspartate 132. Residues 125–145 (FPVFNVADSFISIGIVFLLIA) traverse the membrane as a helical segment.

It belongs to the peptidase A8 family.

The protein resides in the cell inner membrane. The enzyme catalyses Release of signal peptides from bacterial membrane prolipoproteins. Hydrolyzes -Xaa-Yaa-Zaa-|-(S,diacylglyceryl)Cys-, in which Xaa is hydrophobic (preferably Leu), and Yaa (Ala or Ser) and Zaa (Gly or Ala) have small, neutral side chains.. The protein operates within protein modification; lipoprotein biosynthesis (signal peptide cleavage). This protein specifically catalyzes the removal of signal peptides from prolipoproteins. The protein is Lipoprotein signal peptidase of Nostoc punctiforme (strain ATCC 29133 / PCC 73102).